The primary structure comprises 312 residues: tRNA dimethylallyltransferase (312 aa).

Gly-15–Ser-22 contributes to the ATP binding site. Thr-17–Ser-22 contributes to the substrate binding site. Residues Asp-40–Gln-43 form an interaction with substrate tRNA region.

Belongs to the IPP transferase family. Monomer. It depends on Mg(2+) as a cofactor.

The catalysed reaction is adenosine(37) in tRNA + dimethylallyl diphosphate = N(6)-dimethylallyladenosine(37) in tRNA + diphosphate. Functionally, catalyzes the transfer of a dimethylallyl group onto the adenine at position 37 in tRNAs that read codons beginning with uridine, leading to the formation of N6-(dimethylallyl)adenosine (i(6)A). The polypeptide is tRNA dimethylallyltransferase (Streptomyces avermitilis (strain ATCC 31267 / DSM 46492 / JCM 5070 / NBRC 14893 / NCIMB 12804 / NRRL 8165 / MA-4680)).